Here is a 22-residue protein sequence, read N- to C-terminus: Peptide PGLa-BM3 (22 aa).

L22 is subject to Leucine amide.

Expressed by the skin glands.

The protein localises to the secreted. Functionally, antimicrobial peptide. The chain is Peptide PGLa-BM3 from Xenopus boumbaensis (Mawa clawed frog).